The chain runs to 427 residues: Citrate synthase (427 aa).

At Lys283 the chain carries N6-acetyllysine. Catalysis depends on residues His306 and Asp363.

It belongs to the citrate synthase family. As to quaternary structure, homohexamer.

It carries out the reaction oxaloacetate + acetyl-CoA + H2O = citrate + CoA + H(+). It participates in carbohydrate metabolism; tricarboxylic acid cycle; isocitrate from oxaloacetate: step 1/2. In Escherichia coli O6:H1 (strain CFT073 / ATCC 700928 / UPEC), this protein is Citrate synthase (gltA).